An 89-amino-acid polypeptide reads, in one-letter code: Small ribosomal subunit protein uS15 (89 aa).

The protein belongs to the universal ribosomal protein uS15 family. As to quaternary structure, part of the 30S ribosomal subunit. Forms a bridge to the 50S subunit in the 70S ribosome, contacting the 23S rRNA.

Its function is as follows. One of the primary rRNA binding proteins, it binds directly to 16S rRNA where it helps nucleate assembly of the platform of the 30S subunit by binding and bridging several RNA helices of the 16S rRNA. In terms of biological role, forms an intersubunit bridge (bridge B4) with the 23S rRNA of the 50S subunit in the ribosome. The polypeptide is Small ribosomal subunit protein uS15 (Parafrankia sp. (strain EAN1pec)).